The sequence spans 406 residues: MTVLDRFLKYVTFDTQSNEETGTTPSTPGQRVFAEALVKELEAIGMEEISLDENSYVMATLPANTDEKIPTIGFIAHLDTSPDMSGKNVQPRIVTYLGGDIVLDAEENVVLSQSMFPELSDYKGQDIIVTNGKTLLGADDKGGVAAIVASMQYLKDHPEIKHGKIRIAFTPDEEIGQGADHFDVEKFGCDWGYTIDGGQIGELEYENFNAAGAKIIFKGLNVHPGYAKDKMQNASLRAIEFASWLPAEQRPEHTTGYEGFFHLTGMTGSVEEATLSYIIRDHDRKLFEEKKELLRTLVDKMNEAHPGCAHLELRDQYYNMREVVEPQKHIVDLAFEAMTSVGVEPIVKPIRGGTDGARLSFMGLPCPNIFAGGLNFHGRYEFLPVRSLEKSMETVIKIIELSARKS.

His-77 provides a ligand contact to Zn(2+). Asp-79 is a catalytic residue. Asp-139 contributes to the Zn(2+) binding site. Residue Glu-173 is the Proton acceptor of the active site. Positions 174, 196, and 377 each coordinate Zn(2+).

It belongs to the peptidase M20B family. It depends on Zn(2+) as a cofactor.

It localises to the cytoplasm. It catalyses the reaction Release of the N-terminal residue from a tripeptide.. Cleaves the N-terminal amino acid of tripeptides. In Parabacteroides distasonis (strain ATCC 8503 / DSM 20701 / CIP 104284 / JCM 5825 / NCTC 11152), this protein is Peptidase T.